The sequence spans 249 residues: uncharacterized protein (249 aa).

The S4 RNA-binding domain occupies 7–64; sequence PRVHVFLAEKGVGSRRFCEELIRKKLVRVNNTIAKLGDKVTLGDRIIYKKQIFVFKDF. Asp112 acts as the Nucleophile in catalysis.

It belongs to the pseudouridine synthase RsuA family.

The catalysed reaction is a uridine in RNA = a pseudouridine in RNA. This is an uncharacterized protein from Borreliella burgdorferi (strain ATCC 35210 / DSM 4680 / CIP 102532 / B31) (Borrelia burgdorferi).